The following is a 793-amino-acid chain: Wall-associated receptor kinase-like 18 (793 aa).

An N-terminal signal peptide occupies residues 1-28; the sequence is MSNESTNCSFFLNLFMLLLLLIFYSADA. Residues 29–378 lie on the Extracellular side of the membrane; that stretch reads CQRECGGISI…YRCVRDKTKA (350 aa). 6 N-linked (GlcNAc...) asparagine glycosylation sites follow: asparagine 60, asparagine 130, asparagine 170, asparagine 238, asparagine 285, and asparagine 304. Positions 312-371 are atypical EGF-like; the sequence is CTCGRITISETSYANCGCTYGYTGNPYVLNGCKDIDECKVKFEYCGKTETCVNFEGGYRC. Intrachain disulfides connect cysteine 314-cysteine 327, cysteine 349-cysteine 362, and cysteine 356-cysteine 371. The chain crosses the membrane as a helical span at residues 379–399; that stretch reads IMIGAGTGFGVLVLVGGLWWL. The Cytoplasmic portion of the chain corresponds to 400-793; the sequence is RKFLIKRRIT…VEPLFPRLTW (394 aa). A Protein kinase domain is found at 453 to 728; the sequence is FSENRVLGHG…REVFTELERI (276 aa). ATP-binding positions include 459–467 and lysine 481; that span reads LGHGGQGTV. Tyrosine 526 carries the post-translational modification Phosphotyrosine. Aspartate 579 serves as the catalytic Proton acceptor. Phosphothreonine is present on residues threonine 613 and threonine 618. Tyrosine 626 carries the post-translational modification Phosphotyrosine. The tract at residues 733-757 is disordered; that stretch reads EDSQVHNRIDEEEEEEEEEEEVVTT. Acidic residues predominate over residues 742 to 754; it reads DEEEEEEEEEEEV.

Belongs to the protein kinase superfamily. Ser/Thr protein kinase family.

It localises to the membrane. It catalyses the reaction L-seryl-[protein] + ATP = O-phospho-L-seryl-[protein] + ADP + H(+). The enzyme catalyses L-threonyl-[protein] + ATP = O-phospho-L-threonyl-[protein] + ADP + H(+). Functionally, serine/threonine-protein kinase that may function as a signaling receptor of extracellular matrix component. In Arabidopsis thaliana (Mouse-ear cress), this protein is Wall-associated receptor kinase-like 18 (WAKL18).